The sequence spans 276 residues: MLERVAVLYNPLSDASIKLSRELTDWLIARGIKTRRGVSQEFRDQPQLVADCDLMIALGGDGTVLRAARLCFPHNIPVLPVALGHLSFMAEIGPEEVYSGCEQIMNGGGWFDERTLVRAQLWRNGQKLGQHTALNEVVISRSDISRIVNVHVTIDDSPLTTYHADGVIVATATGSTAYALAAGGPIVDPRSQALVLVPIAAHLTNIPSMVLHEDAVVTMQLRSRHHALLAVDGRENIDLIEGDEVVVRRSPQVCTFVRLRPSNQFYTQLVARLRRS.

D61 serves as the catalytic Proton acceptor. NAD(+) is bound by residues 61 to 62 (DG), R66, 135 to 136 (NE), R146, H163, D165, and A200.

The protein belongs to the NAD kinase family. It depends on a divalent metal cation as a cofactor.

The protein resides in the cytoplasm. It catalyses the reaction NAD(+) + ATP = ADP + NADP(+) + H(+). Its function is as follows. Involved in the regulation of the intracellular balance of NAD and NADP, and is a key enzyme in the biosynthesis of NADP. Catalyzes specifically the phosphorylation on 2'-hydroxyl of the adenosine moiety of NAD to yield NADP. The protein is NAD kinase of Chloroflexus aggregans (strain MD-66 / DSM 9485).